We begin with the raw amino-acid sequence, 108 residues long: UPF0060 membrane protein CC_1976 (108 aa).

4 helical membrane-spanning segments follow: residues 4–24 (FAIY…FWAW), 27–47 (LGKS…FALL), 59–79 (AFAA…QVVE), and 85–105 (RWDL…LFGP).

The protein belongs to the UPF0060 family.

The protein resides in the cell inner membrane. This is UPF0060 membrane protein CC_1976 from Caulobacter vibrioides (strain ATCC 19089 / CIP 103742 / CB 15) (Caulobacter crescentus).